Reading from the N-terminus, the 180-residue chain is Bifunctional protein PyrR (180 aa).

The PRPP-binding motif lies at 101-113 (VILVDDVLYTGRT).

It belongs to the purine/pyrimidine phosphoribosyltransferase family. PyrR subfamily. In terms of assembly, homodimer and homohexamer; in equilibrium.

The catalysed reaction is UMP + diphosphate = 5-phospho-alpha-D-ribose 1-diphosphate + uracil. In terms of biological role, regulates transcriptional attenuation of the pyrimidine nucleotide (pyr) operon by binding in a uridine-dependent manner to specific sites on pyr mRNA. This disrupts an antiterminator hairpin in the RNA and favors formation of a downstream transcription terminator, leading to a reduced expression of downstream genes. Functionally, also displays a weak uracil phosphoribosyltransferase activity which is not physiologically significant. In Bacillus mycoides (strain KBAB4) (Bacillus weihenstephanensis), this protein is Bifunctional protein PyrR.